A 492-amino-acid polypeptide reads, in one-letter code: Argininosuccinate lyase (492 aa).

It belongs to the lyase 1 family. Argininosuccinate lyase subfamily.

It is found in the cytoplasm. The catalysed reaction is 2-(N(omega)-L-arginino)succinate = fumarate + L-arginine. It functions in the pathway amino-acid biosynthesis; L-arginine biosynthesis; L-arginine from L-ornithine and carbamoyl phosphate: step 3/3. The chain is Argininosuccinate lyase from Methanoculleus marisnigri (strain ATCC 35101 / DSM 1498 / JR1).